Reading from the N-terminus, the 507-residue chain is Cytochrome P450 52A7 (507 aa).

Residues 6–26 (LHYWYYVLPAFIIFHWIVSAI) traverse the membrane as a helical segment. Position 456 (Cys456) interacts with heme.

This sequence belongs to the cytochrome P450 family. Requires heme as cofactor.

The protein localises to the membrane. In terms of biological role, together with an NADPH cytochrome P450 the enzyme system catalyzes the terminal hydroxylation as the first step in the assimilation of alkanes and fatty acids. Preferentially hydroxylates lauric acid. The chain is Cytochrome P450 52A7 (CYP52A7) from Candida tropicalis (Yeast).